Here is a 944-residue protein sequence, read N- to C-terminus: Protein translocase subunit SecA (944 aa).

ATP is bound by residues glutamine 77, 95–99 (GEGKT), and aspartate 484. The segment at 920–944 (EQEKQTKKKKKKKPHDDETTKVKIG) is disordered. The segment covering 933-944 (PHDDETTKVKIG) has biased composition (basic and acidic residues).

It belongs to the SecA family. Monomer and homodimer. Part of the essential Sec protein translocation apparatus which comprises SecA, SecYEG and auxiliary proteins SecDF. Other proteins may also be involved.

It localises to the cell membrane. It is found in the cytoplasm. The catalysed reaction is ATP + H2O + cellular proteinSide 1 = ADP + phosphate + cellular proteinSide 2.. Functionally, part of the Sec protein translocase complex. Interacts with the SecYEG preprotein conducting channel. Has a central role in coupling the hydrolysis of ATP to the transfer of proteins into and across the cell membrane, serving as an ATP-driven molecular motor driving the stepwise translocation of polypeptide chains across the membrane. The protein is Protein translocase subunit SecA of Mycoplasma capricolum subsp. capricolum (strain California kid / ATCC 27343 / NCTC 10154).